Reading from the N-terminus, the 405-residue chain is Na(+)-translocating NADH-quinone reductase subunit F (405 aa).

A helical transmembrane segment spans residues 3–23 (IILGIVMFTVIVLVLALMILF). The region spanning 32–124 (GDITIKVNGE…DMDIEVPEEV (93 aa)) is the 2Fe-2S ferredoxin-type domain. Residues cysteine 67, cysteine 73, cysteine 76, and cysteine 108 each contribute to the [2Fe-2S] cluster site. The FAD-binding FR-type domain occupies 127 to 267 (VKKWECTVIS…SGPFGEFFAK (141 aa)).

Belongs to the NqrF family. As to quaternary structure, composed of six subunits; NqrA, NqrB, NqrC, NqrD, NqrE and NqrF. [2Fe-2S] cluster is required as a cofactor. FAD serves as cofactor.

It is found in the cell inner membrane. It carries out the reaction a ubiquinone + n Na(+)(in) + NADH + H(+) = a ubiquinol + n Na(+)(out) + NAD(+). In terms of biological role, NQR complex catalyzes the reduction of ubiquinone-1 to ubiquinol by two successive reactions, coupled with the transport of Na(+) ions from the cytoplasm to the periplasm. The first step is catalyzed by NqrF, which accepts electrons from NADH and reduces ubiquinone-1 to ubisemiquinone by a one-electron transfer pathway. The chain is Na(+)-translocating NADH-quinone reductase subunit F from Neisseria meningitidis serogroup C / serotype 2a (strain ATCC 700532 / DSM 15464 / FAM18).